The primary structure comprises 305 residues: Phosphoribosylaminoimidazole-succinocarboxamide synthase (305 aa).

Belongs to the SAICAR synthetase family.

The enzyme catalyses 5-amino-1-(5-phospho-D-ribosyl)imidazole-4-carboxylate + L-aspartate + ATP = (2S)-2-[5-amino-1-(5-phospho-beta-D-ribosyl)imidazole-4-carboxamido]succinate + ADP + phosphate + 2 H(+). Its pathway is purine metabolism; IMP biosynthesis via de novo pathway; 5-amino-1-(5-phospho-D-ribosyl)imidazole-4-carboxamide from 5-amino-1-(5-phospho-D-ribosyl)imidazole-4-carboxylate: step 1/2. The sequence is that of Phosphoribosylaminoimidazole-succinocarboxamide synthase from Albidiferax ferrireducens (strain ATCC BAA-621 / DSM 15236 / T118) (Rhodoferax ferrireducens).